The primary structure comprises 490 residues: Cobyric acid synthase (490 aa).

Residues 251-444 (GLTIAVIHLP…LHGIFANDAF (194 aa)) form the GATase cobBQ-type domain. C329 acts as the Nucleophile in catalysis. Residue H436 is part of the active site.

Belongs to the CobB/CobQ family. CobQ subfamily.

It participates in cofactor biosynthesis; adenosylcobalamin biosynthesis. In terms of biological role, catalyzes amidations at positions B, D, E, and G on adenosylcobyrinic A,C-diamide. NH(2) groups are provided by glutamine, and one molecule of ATP is hydrogenolyzed for each amidation. The sequence is that of Cobyric acid synthase from Roseiflexus castenholzii (strain DSM 13941 / HLO8).